A 292-amino-acid polypeptide reads, in one-letter code: ATP synthase gamma chain (292 aa).

This sequence belongs to the ATPase gamma chain family. F-type ATPases have 2 components, CF(1) - the catalytic core - and CF(0) - the membrane proton channel. CF(1) has five subunits: alpha(3), beta(3), gamma(1), delta(1), epsilon(1). CF(0) has three main subunits: a, b and c.

The protein localises to the cell inner membrane. In terms of biological role, produces ATP from ADP in the presence of a proton gradient across the membrane. The gamma chain is believed to be important in regulating ATPase activity and the flow of protons through the CF(0) complex. This Syntrophobacter fumaroxidans (strain DSM 10017 / MPOB) protein is ATP synthase gamma chain.